A 505-amino-acid polypeptide reads, in one-letter code: DNA primase large subunit (505 aa).

The segment at 253 to 270 is interdomain linker; sequence LSHSYTGQDYSTQKNTGK. Positions 266–503 are interacts with PRIM1; that stretch reads KNTGKISLDQ…LEMDLEGLEE (238 aa). The [4Fe-4S] cluster site is built by Cys287, Cys367, Cys384, and Cys424. Positions 300 to 442 are RNA:DNA duplex binding; that stretch reads HLRHGGRMQY…NVDDCGFSLN (143 aa). The tract at residues 463 to 486 is disordered; sequence KEISQPETPQHKPSTQKTRDAASA. The span at 467 to 478 shows a compositional bias: polar residues; sequence QPETPQHKPSTQ. Thr470 carries the phosphothreonine modification.

This sequence belongs to the eukaryotic-type primase large subunit family. In terms of assembly, heterodimer of a catalytic subunit PRIM1 and a regulatory subunit PRIM2, also known as the DNA primase complex. Interacts via (C-terminus) with PRIM1. Component of the alpha DNA polymerase complex (also known as the alpha DNA polymerase-primase complex) consisting of four subunits: the catalytic subunit POLA1, the regulatory subunit POLA2, and the primase complex subunits PRIM1 and PRIM2 respectively. Within the complex, POLA1 directly interacts with PRIM2. [4Fe-4S] cluster serves as cofactor.

Its function is as follows. Regulatory subunit of the DNA primase complex and component of the DNA polymerase alpha complex (also known as the alpha DNA polymerase-primase complex) which play an essential role in the initiation of DNA synthesis. During the S phase of the cell cycle, the DNA polymerase alpha complex (composed of a catalytic subunit POLA1, an accessory subunit POLA2 and two primase subunits, the catalytic subunit PRIM1 and the regulatory subunit PRIM2) is recruited to DNA at the replicative forks via direct interactions with MCM10 and WDHD1. The primase subunit of the polymerase alpha complex initiates DNA synthesis by oligomerising short RNA primers on both leading and lagging strands. These primers are initially extended by the polymerase alpha catalytic subunit and subsequently transferred to polymerase delta and polymerase epsilon for processive synthesis on the lagging and leading strand, respectively. In the primase complex, both subunits are necessary for the initial di-nucleotide formation, but the extension of the primer depends only on the catalytic subunit. Binds RNA:DNA duplex and coordinates the catalytic activities of PRIM1 and POLA2 during primase-to-polymerase switch. The sequence is that of DNA primase large subunit (Prim2) from Mus musculus (Mouse).